Reading from the N-terminus, the 494-residue chain is Cysteine--tRNA ligase (494 aa).

Cys-29 is a binding site for Zn(2+). The short motif at 31-41 (VTVYDHCHIGH) is the 'HIGH' region element. Cys-209, His-234, and Glu-238 together coordinate Zn(2+). The 'KMSKS' region motif lies at 266-270 (KMSKS). Lys-269 is a binding site for ATP.

The protein belongs to the class-I aminoacyl-tRNA synthetase family. Monomer. Requires Zn(2+) as cofactor.

It is found in the cytoplasm. It catalyses the reaction tRNA(Cys) + L-cysteine + ATP = L-cysteinyl-tRNA(Cys) + AMP + diphosphate. This is Cysteine--tRNA ligase from Geotalea daltonii (strain DSM 22248 / JCM 15807 / FRC-32) (Geobacter daltonii).